Here is a 90-residue protein sequence, read N- to C-terminus: Cytochrome c7 (90 aa).

A signal peptide spans 1-20 (MKRIIASLALSVFCAGLAFA). Residues His37, His40, Cys47, Cys50, His51, His67, Cys70, Cys73, His74, Cys84, Cys87, and His88 each coordinate heme.

Binds 3 heme groups per subunit.

May be involved in anaerobic iron respiration. This is Cytochrome c7 from Geobacter metallireducens (strain ATCC 53774 / DSM 7210 / GS-15).